Reading from the N-terminus, the 358-residue chain is Protein-arginine kinase (358 aa).

A Phosphagen kinase C-terminal domain is found at 24–255 (IVLSSRIRLA…KQLIRQERVA (232 aa)). ATP is bound by residues 27–31 (SSRIR), histidine 92, arginine 126, 177–181 (RASVM), and 208–213 (RGIYGE). An RDXXRA motif of the pArg binding pocket involved in allosteric regulation motif is present at residues 338-343 (RDERRA).

The protein belongs to the ATP:guanido phosphotransferase family.

It carries out the reaction L-arginyl-[protein] + ATP = N(omega)-phospho-L-arginyl-[protein] + ADP + H(+). Its activity is regulated as follows. Appears to be allosterically activated by the binding of pArg-containing polypeptides to the pArg-binding pocket localized in the C-terminal domain of McsB. In terms of biological role, catalyzes the specific phosphorylation of arginine residues in a large number of proteins. Is part of the bacterial stress response system. Protein arginine phosphorylation has a physiologically important role and is involved in the regulation of many critical cellular processes, such as protein homeostasis, motility, competence, and stringent and stress responses, by regulating gene expression and protein activity. This is Protein-arginine kinase from Shouchella clausii (strain KSM-K16) (Alkalihalobacillus clausii).